Reading from the N-terminus, the 61-residue chain is Small ribosomal subunit protein uS14 (61 aa).

Zn(2+) contacts are provided by Cys24, Cys27, Cys40, and Cys43.

It belongs to the universal ribosomal protein uS14 family. Zinc-binding uS14 subfamily. As to quaternary structure, part of the 30S ribosomal subunit. Contacts proteins S3 and S10. Zn(2+) is required as a cofactor.

In terms of biological role, binds 16S rRNA, required for the assembly of 30S particles and may also be responsible for determining the conformation of the 16S rRNA at the A site. This Borrelia duttonii (strain Ly) protein is Small ribosomal subunit protein uS14.